We begin with the raw amino-acid sequence, 176 residues long: Ribosome maturation factor RimM (176 aa).

The PRC barrel domain occupies 93 to 172 (EGEFFYFDVL…EILTKDAKSI (80 aa)).

The protein belongs to the RimM family. As to quaternary structure, binds ribosomal protein uS19.

The protein resides in the cytoplasm. An accessory protein needed during the final step in the assembly of 30S ribosomal subunit, possibly for assembly of the head region. Essential for efficient processing of 16S rRNA. May be needed both before and after RbfA during the maturation of 16S rRNA. It has affinity for free ribosomal 30S subunits but not for 70S ribosomes. This is Ribosome maturation factor RimM from Campylobacter curvus (strain 525.92).